We begin with the raw amino-acid sequence, 1209 residues long: Protein phosphatase 1 regulatory subunit 26 (1209 aa).

Disordered stretches follow at residues 57 to 91, 145 to 279, 291 to 471, 501 to 532, 555 to 694, 733 to 836, 848 to 1033, 1052 to 1072, and 1118 to 1209; these read DGAARGTSDERAAQRGHRAEGCHDARPAAKPTVHK, SGAA…HRQG, KPPR…VERS, GSDGSLSASPLFYSPNVPSRSDGDSSSVDSDD, GESC…EDLD, EQLG…SNDS, KAKE…FAHQ, RGGVGSERDKGSEGPARGLPS, and AFRE…VVKV. The span at 63-91 shows a compositional bias: basic and acidic residues; it reads TSDERAAQRGHRAEGCHDARPAAKPTVHK. A compositionally biased stretch (low complexity) spans 201-219; that stretch reads QVGSSKDQGSASPVSVSSD. Residues 226 to 255 are compositionally biased toward basic and acidic residues; sequence IRAEIEQFLNEKRQHETQKCDGSVEKKPDT. A compositionally biased stretch (polar residues) spans 301–321; that stretch reads QPRSLRSKVTTTQENEGSTKP. Low complexity predominate over residues 352-362; sequence SAAQASEASDS. Residues 442–454 show a composition bias toward basic and acidic residues; it reads DTDHAPKLLKETK. Basic and acidic residues-rich tracts occupy residues 609-637, 667-685, and 757-766; these read KMQEVVKDGSQDADHSQGRAEPGHERRDL, KTDEARRLDEKESSEDKSS, and SKRDSGEGPG. 2 stretches are compositionally biased toward low complexity: residues 821-836 and 852-861; these read PGSLSDDSSSVDSNDS and SVSSSEVQAE. Residue serine 1161 is modified to Phosphoserine. A compositionally biased stretch (low complexity) spans 1187–1209; that stretch reads GSDASDFSDTSTEDSGGSSVVKV.

In terms of assembly, interacts with UTP20 and PPP1CA. As to expression, ubiquitous in normal tissues. Expressed in numerous adenocarcinoma cell lines.

Its subcellular location is the nucleus. The protein resides in the nucleolus. Inhibits phosphatase activity of protein phosphatase 1 (PP1) complexes. May positively regulate cell proliferation. This chain is Protein phosphatase 1 regulatory subunit 26 (PPP1R26), found in Homo sapiens (Human).